The following is a 251-amino-acid chain: Flap endonuclease Xni (251 aa).

Residue D104 coordinates Mg(2+). Positions 160 to 248 (VSPQQLSDYW…ALTGNLQQLR (89 aa)) constitute a 5'-3' exonuclease domain. Positions 171, 172, 180, 182, and 185 each coordinate K(+). The interaction with DNA stretch occupies residues 184–189 (GIGPKT).

This sequence belongs to the Xni family. The cofactor is Mg(2+). K(+) is required as a cofactor.

Has flap endonuclease activity. During DNA replication, flap endonucleases cleave the 5'-overhanging flap structure that is generated by displacement synthesis when DNA polymerase encounters the 5'-end of a downstream Okazaki fragment. In Serratia proteamaculans (strain 568), this protein is Flap endonuclease Xni.